Reading from the N-terminus, the 248-residue chain is MSWSPILPFLSLLLLLFPLEVPRAATASLSQASSEGTTTCKAHDVCLLGPRPLPPSPPVRVSLYYESLCGACRYFLVRDLFPTWLMVMEIMNITLVPYGNAQERNVSGTWEFTCQHGELECRLNMVEACLLDKLEKEAAFLTIVCMEEMDDMEKKLGPCLQVYAPEVSPESIMECATGKRGTQLMHENAQLTDALHPPHEYVPWVLVNEKPLKDPSELLSIVCQLYQGTEKPDICSSIADSPRKVCYK.

Residues M1 to T26 form the signal peptide. A propeptide spans A27–P54 (removed in mature form). C69 and C72 are oxidised to a cystine. N-linked (GlcNAc...) asparagine glycans are attached at residues N92 and N105. Positions K231–K248 are cleaved as a propeptide — removed in mature form.

The protein belongs to the GILT family. In terms of assembly, dimer; disulfide-linked. Post-translationally, N-glycosylated. Sugar chains contain mannose-6-phosphate. In terms of processing, synthesized as a 35 kDa precursor which is then processed into the mature 30 kDa form via cleavage of N-terminal and C-terminal propeptides. Processing of the precursor is mediated by multiple lysosomal proteases.

The protein localises to the secreted. It is found in the lysosome. Its function is as follows. Lysosomal thiol reductase that can reduce protein disulfide bonds. May facilitate the complete unfolding of proteins destined for lysosomal degradation. Plays an important role in antigen processing. Facilitates the generation of MHC class II-restricted epitodes from disulfide bond-containing antigen by the endocytic reduction of disulfide bonds. Also facilitates MHC class I-restricted recognition of exogenous antigens containing disulfide bonds by CD8+ T-cells or crosspresentation. The sequence is that of Gamma-interferon-inducible lysosomal thiol reductase (Ifi30) from Mus musculus (Mouse).